A 325-amino-acid polypeptide reads, in one-letter code: Probable tRNA pseudouridine synthase B (325 aa).

D71 functions as the Nucleophile in the catalytic mechanism. The 76-residue stretch at 238–313 (LPKIYVKDSA…VAASIERVIM (76 aa)) folds into the PUA domain.

Belongs to the pseudouridine synthase TruB family. Type 2 subfamily.

The catalysed reaction is uridine(55) in tRNA = pseudouridine(55) in tRNA. Could be responsible for synthesis of pseudouridine from uracil-55 in the psi GC loop of transfer RNAs. The sequence is that of Probable tRNA pseudouridine synthase B from Korarchaeum cryptofilum (strain OPF8).